The following is a 309-amino-acid chain: Malate dehydrogenase (309 aa).

NAD(+) contacts are provided by residues 8 to 13 (GAGLVG) and Asp-33. Positions 82 and 88 each coordinate substrate. NAD(+)-binding positions include Asn-95 and 118–120 (VSN). Asn-120 and Arg-151 together coordinate substrate. His-175 (proton acceptor) is an active-site residue.

This sequence belongs to the LDH/MDH superfamily. MDH type 3 family.

The catalysed reaction is (S)-malate + NAD(+) = oxaloacetate + NADH + H(+). Functionally, catalyzes the reversible oxidation of malate to oxaloacetate. This is Malate dehydrogenase from Pseudomonas putida (strain ATCC 700007 / DSM 6899 / JCM 31910 / BCRC 17059 / LMG 24140 / F1).